A 430-amino-acid polypeptide reads, in one-letter code: Adenylosuccinate synthetase (430 aa).

GTP contacts are provided by residues 12-18 (GDEGKGK) and 40-42 (GHT). Aspartate 13 serves as the catalytic Proton acceptor. Mg(2+) contacts are provided by aspartate 13 and glycine 40. Residues 13–16 (DEGK), 38–41 (NAGH), threonine 128, arginine 142, glutamine 223, threonine 238, and arginine 302 each bind IMP. The Proton donor role is filled by histidine 41. Position 298–304 (298–304 (TTTGRPR)) interacts with substrate. GTP is bound by residues arginine 304, 330-332 (LLD), and 412-414 (SVG).

It belongs to the adenylosuccinate synthetase family. As to quaternary structure, homodimer. Mg(2+) serves as cofactor.

It is found in the cytoplasm. It carries out the reaction IMP + L-aspartate + GTP = N(6)-(1,2-dicarboxyethyl)-AMP + GDP + phosphate + 2 H(+). It functions in the pathway purine metabolism; AMP biosynthesis via de novo pathway; AMP from IMP: step 1/2. Its function is as follows. Plays an important role in the de novo pathway of purine nucleotide biosynthesis. Catalyzes the first committed step in the biosynthesis of AMP from IMP. This chain is Adenylosuccinate synthetase, found in Listeria monocytogenes serotype 4a (strain HCC23).